Consider the following 140-residue polypeptide: Trafficking protein particle complex subunit 2-like protein (140 aa).

Belongs to the TRAPP small subunits family. Sedlin subfamily.

This is Trafficking protein particle complex subunit 2-like protein (trappc2l) from Dictyostelium discoideum (Social amoeba).